Consider the following 683-residue polypeptide: MTIKEHKVVYEAHNVKALKAPQHFYNSQPGKGYVTDMQHYQEMYQQSINEPEKFFDKMAKEYLHWDAPYTKVQSGSLNNGDVAWFLNGKLNASYNCVDRHAFANPDKPALIYEADDESDNKIITFGELLRKVSQIAGVLKSWGVKKGDTVAIYLPMIPEAVIAMLAVARIGAIHSVVFAGFSAGSLKDRVVDANSKVVITCDEGKRGGKTINTKKIVDEGLNGVDLVSRILVFQRTGTEGIPMKAGRDYWWHEEAAKQRTYLPPVSCDAEDPLFLLYTSGSTGSPKGVVHTTGGYLLGAALTTRYVFDIHPEDVLFTAGDVGWITGHTYALYGPLTLGTASIIFESTPAYPDYGRYWRIIQRHKATHFYVAPTALRLIKRVGEAEIAKYDTSSLRVLGSVGEPISPDLWEWYHEKVGNKNCVICDTMWQTESGSHLIAPLAGAVPTKPGSATVPFFGINACIIDPVTGVELEGNDVEGVLAVKSPWPSMARSVWNHHDRYMDTYLKPYPGHYFTGDGAGRDHDGYYWIRGRVDDVVNVSGHRLSTSEIEASISNHENVSEAAVVGIPDELTGQTVVAYVSLKDGYLQNNATEGDAEHITPDNLRRELILQVRGEIGPFASPKTIILVRDLPRTRSGKIMRRVLRKVASNEAEQLGDLTTLANPEVVPAIISAVENQFFSQKKK.

Residues 206–209 (RGGK) and Thr325 each bind CoA. ATP-binding positions include 401-403 (GEP) and 425-430 (DTMWQT). 425-430 (DTMWQT) serves as a coordination point for AMP. Residue Lys506 forms a Glycyl lysine isopeptide (Lys-Gly) (interchain with G-Cter in ubiquitin) linkage. Positions 516 and 531 each coordinate ATP. AMP-binding residues include Asp516 and Arg531. Ser539 is a binding site for CoA. Arg542 contacts ATP. Arg612 contacts CoA. Phosphoserine is present on Ser679.

It belongs to the ATP-dependent AMP-binding enzyme family.

It localises to the cytoplasm. The protein localises to the nucleus. The catalysed reaction is acetate + ATP + CoA = acetyl-CoA + AMP + diphosphate. It participates in carbohydrate metabolism; pyruvate metabolism. Functionally, catalyzes the production of acetyl-CoA. Provides the acetyl-CoA source for histone acetylation in the nucleus. 'Anaerobic' isozyme of acetyl-coenzyme A synthetase, which is required for growth on fermentable carbon sources such as glucose. May be involved in the PDH (pyruvate dehydrogenase complex) bypass. The protein is Acetyl-coenzyme A synthetase 2 of Saccharomyces cerevisiae (strain ATCC 204508 / S288c) (Baker's yeast).